Reading from the N-terminus, the 490-residue chain is Dual specificity protein kinase CLK3 (490 aa).

Residues 1–138 are disordered; that stretch reads MHHCKRYRSP…SKRSSRSVED (138 aa). Tyrosine 7 is subject to Phosphotyrosine. A phosphoserine mark is found at serine 9, serine 49, serine 51, serine 67, serine 76, and serine 78. 2 stretches are compositionally biased toward basic and acidic residues: residues 26 to 56 and 63 to 76; these read YSREHEGRLRYPSRREPPPRRSRSRSHDRLP and ERRDSDTYRCEERS. Residues 88-116 are compositionally biased toward basic residues; the sequence is RSRHRRRSRERGPYRTRKHAHHCHKRRTR. A compositionally biased stretch (low complexity) spans 117–130; that stretch reads SCSSASSRSQQSSK. At serine 135 the chain carries Phosphoserine. One can recognise a Protein kinase domain in the interval 156–472; that stretch reads YEIVGNLGEG…LAEALLHPFF (317 aa). Residues 162 to 170 and lysine 186 contribute to the ATP site; that span reads LGEGTFGKV. The active-site Proton acceptor is the aspartate 283.

Belongs to the protein kinase superfamily. CMGC Ser/Thr protein kinase family. Lammer subfamily. Autophosphorylates on all three types of residues. Endothelial cells.

The protein localises to the nucleus. It localises to the cytoplasm. It is found in the cytoplasmic vesicle. The protein resides in the secretory vesicle. Its subcellular location is the acrosome. The protein localises to the nucleus speckle. It catalyses the reaction L-seryl-[protein] + ATP = O-phospho-L-seryl-[protein] + ADP + H(+). The enzyme catalyses L-threonyl-[protein] + ATP = O-phospho-L-threonyl-[protein] + ADP + H(+). It carries out the reaction L-tyrosyl-[protein] + ATP = O-phospho-L-tyrosyl-[protein] + ADP + H(+). Leucettine L41 inhibits its kinase activity and affects the regulation of alternative splicing mediated by phosphorylation of SR proteins. Its function is as follows. Dual specificity kinase acting on both serine/threonine and tyrosine-containing substrates. Phosphorylates serine- and arginine-rich (SR) proteins of the spliceosomal complex. May be a constituent of a network of regulatory mechanisms that enable SR proteins to control RNA splicing and can cause redistribution of SR proteins from speckles to a diffuse nucleoplasmic distribution. Phosphorylates SRSF1 and SRSF3. Regulates the alternative splicing of tissue factor (F3) pre-mRNA in endothelial cells. The chain is Dual specificity protein kinase CLK3 from Homo sapiens (Human).